A 257-amino-acid chain; its full sequence is Outer membrane protein Omp26La (257 aa).

The signal sequence occupies residues Met1–Ala19.

This sequence belongs to the MipA/OmpV family.

Its subcellular location is the cell outer membrane. The sequence is that of Outer membrane protein Omp26La from Vibrio anguillarum (Listonella anguillarum).